The following is a 454-amino-acid chain: Ribosomal protein uS12 methylthiotransferase RimO (454 aa).

In terms of domain architecture, MTTase N-terminal spans 14-125 (SKVAFSHVGC…IAKVLDRVEK (112 aa)). [4Fe-4S] cluster is bound by residues Cys23, Cys59, Cys88, Cys163, Cys167, and Cys170. The Radical SAM core domain maps to 149–378 (DKNKFVAYLR…ISVQQNISKD (230 aa)). The TRAM domain maps to 381–452 (QSYVGSKMKI…EYDLYGETLK (72 aa)).

The protein belongs to the methylthiotransferase family. RimO subfamily. [4Fe-4S] cluster serves as cofactor.

Its subcellular location is the cytoplasm. The catalysed reaction is L-aspartate(89)-[ribosomal protein uS12]-hydrogen + (sulfur carrier)-SH + AH2 + 2 S-adenosyl-L-methionine = 3-methylsulfanyl-L-aspartate(89)-[ribosomal protein uS12]-hydrogen + (sulfur carrier)-H + 5'-deoxyadenosine + L-methionine + A + S-adenosyl-L-homocysteine + 2 H(+). In terms of biological role, catalyzes the methylthiolation of an aspartic acid residue of ribosomal protein uS12. The protein is Ribosomal protein uS12 methylthiotransferase RimO of Prochlorococcus marinus (strain MIT 9215).